Here is a 91-residue protein sequence, read N- to C-terminus: Probable Fe(2+)-trafficking protein (91 aa).

Belongs to the Fe(2+)-trafficking protein family.

In terms of biological role, could be a mediator in iron transactions between iron acquisition and iron-requiring processes, such as synthesis and/or repair of Fe-S clusters in biosynthetic enzymes. The chain is Probable Fe(2+)-trafficking protein from Ralstonia nicotianae (strain ATCC BAA-1114 / GMI1000) (Ralstonia solanacearum).